Consider the following 219-residue polypeptide: GPI ethanolamine phosphate transferase, stabilizing subunit (219 aa).

The next 6 helical transmembrane spans lie at 11 to 31 (YTNLLCVFSIFLSIFIPSFFV), 42 to 62 (TWLCICSASVTTVNLLSYLVV), 86 to 106 (CFLMSCFLLHIIFVLYGAPLI), 113 to 133 (FLFAVVLSTFTTVPCLCLLGP), 155 to 175 (LQITTISSFTGAWLGAFPIPL), and 189 to 209 (TLGATFGYVAGLVISPLWIYW).

This sequence belongs to the PIGF family. In terms of assembly, part of the ethanolamine phosphate transferase 3 complex composed by PIGO and PIGF. Part of the ethanolamine phosphate transferase 2 complex with PIGG. PIGF is required to stabilize PIGG and PIGO.

Its subcellular location is the endoplasmic reticulum membrane. It functions in the pathway glycolipid biosynthesis; glycosylphosphatidylinositol-anchor biosynthesis. Stabilizing subunit of the ethanolamine phosphate transferase 3 and ethanolamine phosphate transferase 2 complexes that sequentially transfer an ethanolamine phosphate (EtNP) from a phosphatidylethanolamine (PE) to the 6-OH position of the third alpha-1,2-linked mannose and the second alpha-1,6-linked mannose of the alpha-D-Man-(1-&gt;2)-alpha-D-Man-(1-&gt;6)-2-PEtn-alpha-D-Man-(1-&gt;4)-alpha-D-GlcN-(1-&gt;6)-(1-radyl,2-acyl-sn-glycero-3-phospho)-2-acyl-inositol (also termed H6) intermediate to generate a 6-PEtn-alpha-D-Man-(1-&gt;2)-6-PEtn-alpha-D-Man-(1-&gt;6)-2-PEtn-alpha-D-Man-(1-&gt;4)-alpha-D-GlcN-(1-&gt;6)-(1-radyl,2-acyl-sn-glycero-3-phospho)-2-acyl-inositol (also termed H8). Participates in the tenth and eleventh steps of the glycosylphosphatidylinositol-anchor biosynthesis, in association with PIGO and PIGG, respectively. This Mus musculus (Mouse) protein is GPI ethanolamine phosphate transferase, stabilizing subunit.